The primary structure comprises 490 residues: Beta-N-acetyl-D-glucosaminide beta-1,4-N-acetylglucosaminyl-transferase (490 aa).

Residues 1–30 (MYLVVCWGRVTGNMISTRHCFSRCKSRSVR) lie on the Cytoplasmic side of the membrane. Residues 31-50 (VIKATAMLFVAAMLFLALHM) form a helical; Signal-anchor for type II membrane protein membrane-spanning segment. N-linked (GlcNAc...) asparagine glycans are attached at residues N51, N82, N441, N459, and N485. Over 51 to 490 (NFSHEASQQN…YLTGNFTIIS (440 aa)) the chain is Lumenal.

The protein belongs to the glycosyltransferase 7 family.

Its subcellular location is the golgi apparatus membrane. It carries out the reaction an N-acetyl-beta-D-glucosaminyl derivative + UDP-N-acetyl-alpha-D-glucosamine = an N-acetyl-beta-D-glucosaminyl-(1-&gt;4)-N-acetyl-beta-D-glucosaminyl derivative + UDP + H(+). It functions in the pathway protein modification; protein glycosylation. The polypeptide is Beta-N-acetyl-D-glucosaminide beta-1,4-N-acetylglucosaminyl-transferase (GNT) (Lymnaea stagnalis (Great pond snail)).